Reading from the N-terminus, the 209-residue chain is Guanylate kinase (209 aa).

Residues 5–184 form the Guanylate kinase-like domain; sequence GLLIVFSGPS…AAERVKRVIE (180 aa). An ATP-binding site is contributed by 12–19; the sequence is GPSGVGKG.

This sequence belongs to the guanylate kinase family.

Its subcellular location is the cytoplasm. The enzyme catalyses GMP + ATP = GDP + ADP. In terms of biological role, essential for recycling GMP and indirectly, cGMP. This chain is Guanylate kinase, found in Streptococcus agalactiae serotype Ia (strain ATCC 27591 / A909 / CDC SS700).